Reading from the N-terminus, the 237-residue chain is Purine nucleoside phosphorylase DeoD-type (237 aa).

His-4 contacts a purine D-ribonucleoside. Phosphate is bound by residues Gly-20, Arg-24, Arg-43, and 87-90 (RVGS). A purine D-ribonucleoside contacts are provided by residues 179–181 (EME) and 203–204 (SD). The active-site Proton donor is Asp-204.

It belongs to the PNP/UDP phosphorylase family. Homohexamer; trimer of homodimers.

The catalysed reaction is a purine D-ribonucleoside + phosphate = a purine nucleobase + alpha-D-ribose 1-phosphate. The enzyme catalyses a purine 2'-deoxy-D-ribonucleoside + phosphate = a purine nucleobase + 2-deoxy-alpha-D-ribose 1-phosphate. In terms of biological role, catalyzes the reversible phosphorolytic breakdown of the N-glycosidic bond in the beta-(deoxy)ribonucleoside molecules, with the formation of the corresponding free purine bases and pentose-1-phosphate. This Dichelobacter nodosus (strain VCS1703A) protein is Purine nucleoside phosphorylase DeoD-type.